The chain runs to 177 residues: Large ribosomal subunit protein uL6 (177 aa).

It belongs to the universal ribosomal protein uL6 family. Part of the 50S ribosomal subunit.

Its function is as follows. This protein binds to the 23S rRNA, and is important in its secondary structure. It is located near the subunit interface in the base of the L7/L12 stalk, and near the tRNA binding site of the peptidyltransferase center. This is Large ribosomal subunit protein uL6 from Pectobacterium atrosepticum (strain SCRI 1043 / ATCC BAA-672) (Erwinia carotovora subsp. atroseptica).